The sequence spans 810 residues: Phenylalanine--tRNA ligase beta subunit (810 aa).

Positions 39-154 (APPTEKIVVG…EGTPVGQDIR (116 aa)) constitute a tRNA-binding domain. In terms of domain architecture, B5 spans 405–480 (PQRAPVSMRA…RIYGFEKIPA (76 aa)). Positions 458, 464, 467, and 468 each coordinate Mg(2+). Residues 707–809 (SKFPPVRRDI…MARVYGARLR (103 aa)) enclose the FDX-ACB domain.

It belongs to the phenylalanyl-tRNA synthetase beta subunit family. Type 1 subfamily. In terms of assembly, tetramer of two alpha and two beta subunits. Requires Mg(2+) as cofactor.

Its subcellular location is the cytoplasm. It catalyses the reaction tRNA(Phe) + L-phenylalanine + ATP = L-phenylalanyl-tRNA(Phe) + AMP + diphosphate + H(+). This chain is Phenylalanine--tRNA ligase beta subunit, found in Burkholderia pseudomallei (strain 1710b).